A 151-amino-acid polypeptide reads, in one-letter code: Large ribosomal subunit protein eL8 (151 aa).

The protein belongs to the eukaryotic ribosomal protein eL8 family. In terms of assembly, part of the 50S ribosomal subunit. Probably part of the RNase P complex.

Its subcellular location is the cytoplasm. Multifunctional RNA-binding protein that recognizes the K-turn motif in ribosomal RNA, the RNA component of RNase P, box H/ACA, box C/D and box C'/D' sRNAs. In Pyrobaculum aerophilum (strain ATCC 51768 / DSM 7523 / JCM 9630 / CIP 104966 / NBRC 100827 / IM2), this protein is Large ribosomal subunit protein eL8.